The sequence spans 199 residues: V-type ATP synthase subunit E (199 aa).

Belongs to the V-ATPase E subunit family.

Its function is as follows. Produces ATP from ADP in the presence of a proton gradient across the membrane. The sequence is that of V-type ATP synthase subunit E from Borreliella afzelii (strain PKo) (Borrelia afzelii).